Reading from the N-terminus, the 203-residue chain is Chemotactic transduction protein ChpE (203 aa).

A run of 5 helical transmembrane segments spans residues Ala-3 to Phe-23, Leu-46 to Tyr-66, Val-69 to Leu-89, Asn-123 to Asn-143, and Val-149 to Val-169.

Belongs to the Rht family.

The protein resides in the cell membrane. The sequence is that of Chemotactic transduction protein ChpE (chpE) from Pseudomonas aeruginosa (strain ATCC 15692 / DSM 22644 / CIP 104116 / JCM 14847 / LMG 12228 / 1C / PRS 101 / PAO1).